We begin with the raw amino-acid sequence, 145 residues long: UPF0735 ACT domain-containing protein CPR_1404 (145 aa).

Positions 69 to 144 (IFNMVVTHEK…GVEKVEFVAM (76 aa)) constitute an ACT domain.

This sequence belongs to the UPF0735 family.

This chain is UPF0735 ACT domain-containing protein CPR_1404, found in Clostridium perfringens (strain SM101 / Type A).